Here is a 153-residue protein sequence, read N- to C-terminus: Membrane-spanning 4-domains subfamily A member 13 (153 aa).

The next 4 helical transmembrane spans lie at 1 to 21 (MTGIFCIFMWYLLLILYMGQI), 36 to 56 (GCSLWGIFFIISGISIIRATW), 71 to 91 (ILCMILAIISMILTIVELSTF), and 111 to 131 (VLLSFYPLEVSMALTYSIFGC).

It belongs to the MS4A family.

Its subcellular location is the membrane. May be involved in signal transduction as a component of a multimeric receptor complex. The sequence is that of Membrane-spanning 4-domains subfamily A member 13 (MS4A13) from Bos taurus (Bovine).